The chain runs to 1064 residues: Carbamoyl phosphate synthase pyrimidine-specific large chain (1064 aa).

Positions 1–401 (MPKRRDIETI…SLLKAVRSLE (401 aa)) are carboxyphosphate synthetic domain. R129, R169, G175, G176, R208, I210, G241, I242, H243, Q284, and E298 together coordinate ATP. The ATP-grasp 1 domain maps to 133 to 327 (RALMNELGEP…IAKLAAKIAV (195 aa)). 3 residues coordinate Mg(2+): Q284, E298, and N300. 3 residues coordinate Mn(2+): Q284, E298, and N300. Residues 402-546 (IGVHHLELNE…YSTYEEENES (145 aa)) are oligomerization domain. The carbamoyl phosphate synthetic domain stretch occupies residues 547-929 (IVTEKPSVIV…ALYKGLVASG (383 aa)). The 191-residue stretch at 671–861 (EQALSELGIP…MANLATKAIL (191 aa)) folds into the ATP-grasp 2 domain. Residues R707, R746, I748, E752, G777, V778, H779, S780, Q820, and E832 each contribute to the ATP site. Q820, E832, and N834 together coordinate Mg(2+). Mn(2+)-binding residues include Q820, E832, and N834. One can recognise an MGS-like domain in the interval 930–1064 (IQIQPHGAVL…TAMTEGLVRS (135 aa)). Residues 930 to 1064 (IQIQPHGAVL…TAMTEGLVRS (135 aa)) form an allosteric domain region.

This sequence belongs to the CarB family. As to quaternary structure, composed of two chains; the small (or glutamine) chain promotes the hydrolysis of glutamine to ammonia, which is used by the large (or ammonia) chain to synthesize carbamoyl phosphate. Tetramer of heterodimers (alpha,beta)4. Mg(2+) is required as a cofactor. The cofactor is Mn(2+).

It carries out the reaction hydrogencarbonate + L-glutamine + 2 ATP + H2O = carbamoyl phosphate + L-glutamate + 2 ADP + phosphate + 2 H(+). The catalysed reaction is hydrogencarbonate + NH4(+) + 2 ATP = carbamoyl phosphate + 2 ADP + phosphate + 2 H(+). It participates in amino-acid biosynthesis; L-arginine biosynthesis; carbamoyl phosphate from bicarbonate: step 1/1. Its pathway is pyrimidine metabolism; UMP biosynthesis via de novo pathway; (S)-dihydroorotate from bicarbonate: step 1/3. Its function is as follows. Small subunit of the glutamine-dependent carbamoyl phosphate synthetase (CPSase). CPSase catalyzes the formation of carbamoyl phosphate from the ammonia moiety of glutamine, carbonate, and phosphate donated by ATP, constituting the first step of the biosynthetic pathway leading to pyrimidine nucleotides. The large subunit (synthetase) binds the substrates ammonia (free or transferred from glutamine from the small subunit), hydrogencarbonate and ATP and carries out an ATP-coupled ligase reaction, activating hydrogencarbonate by forming carboxy phosphate which reacts with ammonia to form carbamoyl phosphate. The protein is Carbamoyl phosphate synthase pyrimidine-specific large chain (pyrAB) of Geobacillus stearothermophilus (Bacillus stearothermophilus).